Reading from the N-terminus, the 418-residue chain is uncharacterized protein (418 aa).

A run of 10 helical transmembrane segments spans residues 51–71 (FVMA…GALV), 79–99 (ALVV…PLFA), 110–130 (VTGI…LGAV), 163–183 (FFGP…SVLA), 224–244 (VIFG…LPLV), 258–278 (ALMS…AYVV), 289–309 (PIFL…TLSD), 315–335 (VGVQ…FPLV), 356–376 (ATGI…VVAG), and 379–399 (AAFM…LVAM).

Belongs to the major facilitator superfamily.

It localises to the cell membrane. This is an uncharacterized protein from Mycobacterium tuberculosis (strain CDC 1551 / Oshkosh).